We begin with the raw amino-acid sequence, 424 residues long: Adenylosuccinate synthetase (424 aa).

GTP is bound by residues 12 to 18 (GDEGKGK) and 40 to 42 (GHT). Residue Asp-13 is the Proton acceptor of the active site. Mg(2+) is bound by residues Asp-13 and Gly-40. Residues 13-16 (DEGK), 38-41 (NAGH), Thr-130, Arg-144, Asn-220, Thr-235, and Arg-299 each bind IMP. Catalysis depends on His-41, which acts as the Proton donor. 295–301 (VTTGRRR) serves as a coordination point for substrate. Residues Arg-301, 327–329 (KLD), and 412–414 (GTG) contribute to the GTP site.

This sequence belongs to the adenylosuccinate synthetase family. As to quaternary structure, homodimer. The cofactor is Mg(2+).

The protein resides in the cytoplasm. The catalysed reaction is IMP + L-aspartate + GTP = N(6)-(1,2-dicarboxyethyl)-AMP + GDP + phosphate + 2 H(+). Its pathway is purine metabolism; AMP biosynthesis via de novo pathway; AMP from IMP: step 1/2. Plays an important role in the de novo pathway and in the salvage pathway of purine nucleotide biosynthesis. Catalyzes the first committed step in the biosynthesis of AMP from IMP. The sequence is that of Adenylosuccinate synthetase from Aspergillus fumigatus (strain CBS 144.89 / FGSC A1163 / CEA10) (Neosartorya fumigata).